The following is a 521-amino-acid chain: MNKLVNKNIFINKNNSLKNFVNNYSTKTNNNNNNIFNKNKNDLKSFSSSSKLNNNNNNNNKYEESKLMNAEDLILNQIKISKSPFVKIAGSDIDGILRGKYLDKSKFESSIKKGLGFCSVIFGWDSSDSAYDNVKFTGNHTGYPDMGARPDLSTFRTIPWEYDVPLFLMDFIGTNGEPLPICPRSTLKKVIKKCHEHQFDPVQGMEFEWYNYSENNKSLLNKNFSNLEPLSNGMFGYSLLRTSQNSEFMNSLAELQGFGVPLEGLHTETGPGVYEAAIRFSTALESADRAILFKHCTKEIASLQGIMASFMAKPFKDLPGCSGHMHQNFNCLKTGKNLFLDESDPNHMSDIFKSFVAGQLLLLPEFLPFFAPTINSYKRLVDGYWAPTTPTWGMDNRTVALRIIKGGKATRSEFRVTGSDVNPYISIAASFAAGLYGVINKLELKQKPIIGNSYDLYKKGLVERLPRSLAESTELLSKSKIAKEYLGEEFVDHFVETRRWEYRQFNHQVHKWELERYLEII.

Residues 76–176 enclose the GS beta-grasp domain; sequence NQIKISKSPF…FLMDFIGTNG (101 aa). A GS catalytic domain is found at 183–521; the sequence is PRSTLKKVIK…WELERYLEII (339 aa).

Belongs to the glutamine synthetase family.

The catalysed reaction is L-glutamate + NH4(+) + ATP = L-glutamine + ADP + phosphate + H(+). The sequence is that of Type-1 glutamine synthetase 2 (glnA2) from Dictyostelium discoideum (Social amoeba).